The following is a 94-amino-acid chain: Co-chaperonin GroES (94 aa).

This sequence belongs to the GroES chaperonin family. Heptamer of 7 subunits arranged in a ring. Interacts with the chaperonin GroEL.

Its subcellular location is the cytoplasm. In terms of biological role, together with the chaperonin GroEL, plays an essential role in assisting protein folding. The GroEL-GroES system forms a nano-cage that allows encapsulation of the non-native substrate proteins and provides a physical environment optimized to promote and accelerate protein folding. GroES binds to the apical surface of the GroEL ring, thereby capping the opening of the GroEL channel. The protein is Co-chaperonin GroES of Enterococcus faecalis (strain ATCC 700802 / V583).